The sequence spans 145 residues: Large ribosomal subunit protein uL11 (145 aa).

It belongs to the universal ribosomal protein uL11 family. In terms of assembly, part of the ribosomal stalk of the 50S ribosomal subunit. Interacts with L10 and the large rRNA to form the base of the stalk. L10 forms an elongated spine to which L12 dimers bind in a sequential fashion forming a multimeric L10(L12)X complex. In terms of processing, one or more lysine residues are methylated.

In terms of biological role, forms part of the ribosomal stalk which helps the ribosome interact with GTP-bound translation factors. This Rickettsia peacockii (strain Rustic) protein is Large ribosomal subunit protein uL11.